Here is a 227-residue protein sequence, read N- to C-terminus: Cytochrome c oxidase subunit 2 (227 aa).

Over 1–14 (MAYPFQLGLQDATS) the chain is Mitochondrial intermembrane. The helical transmembrane segment at 15–45 (PIMEELTNFHDHTLMIVFLISSLVLYIISSM) threads the bilayer. The Mitochondrial matrix segment spans residues 46-59 (LATKMTHTSTMDAQ). Residues 60 to 87 (SMETIWTILPAVILVLIALPSLRILYMM) form a helical membrane-spanning segment. Residues 88 to 227 (DEINNPVLTV…FFENWSASMI (140 aa)) lie on the Mitochondrial intermembrane side of the membrane. Residues H161, C196, E198, C200, H204, and M207 each coordinate Cu cation. Residue E198 participates in Mg(2+) binding.

The protein belongs to the cytochrome c oxidase subunit 2 family. As to quaternary structure, component of the cytochrome c oxidase (complex IV, CIV), a multisubunit enzyme composed of 14 subunits. The complex is composed of a catalytic core of 3 subunits MT-CO1, MT-CO2 and MT-CO3, encoded in the mitochondrial DNA, and 11 supernumerary subunits COX4I, COX5A, COX5B, COX6A, COX6B, COX6C, COX7A, COX7B, COX7C, COX8 and NDUFA4, which are encoded in the nuclear genome. The complex exists as a monomer or a dimer and forms supercomplexes (SCs) in the inner mitochondrial membrane with NADH-ubiquinone oxidoreductase (complex I, CI) and ubiquinol-cytochrome c oxidoreductase (cytochrome b-c1 complex, complex III, CIII), resulting in different assemblies (supercomplex SCI(1)III(2)IV(1) and megacomplex MCI(2)III(2)IV(2)). Found in a complex with TMEM177, COA6, COX18, COX20, SCO1 and SCO2. Interacts with TMEM177 in a COX20-dependent manner. Interacts with COX20. Interacts with COX16. The cofactor is Cu cation.

The protein localises to the mitochondrion inner membrane. The catalysed reaction is 4 Fe(II)-[cytochrome c] + O2 + 8 H(+)(in) = 4 Fe(III)-[cytochrome c] + 2 H2O + 4 H(+)(out). In terms of biological role, component of the cytochrome c oxidase, the last enzyme in the mitochondrial electron transport chain which drives oxidative phosphorylation. The respiratory chain contains 3 multisubunit complexes succinate dehydrogenase (complex II, CII), ubiquinol-cytochrome c oxidoreductase (cytochrome b-c1 complex, complex III, CIII) and cytochrome c oxidase (complex IV, CIV), that cooperate to transfer electrons derived from NADH and succinate to molecular oxygen, creating an electrochemical gradient over the inner membrane that drives transmembrane transport and the ATP synthase. Cytochrome c oxidase is the component of the respiratory chain that catalyzes the reduction of oxygen to water. Electrons originating from reduced cytochrome c in the intermembrane space (IMS) are transferred via the dinuclear copper A center (CU(A)) of subunit 2 and heme A of subunit 1 to the active site in subunit 1, a binuclear center (BNC) formed by heme A3 and copper B (CU(B)). The BNC reduces molecular oxygen to 2 water molecules using 4 electrons from cytochrome c in the IMS and 4 protons from the mitochondrial matrix. The protein is Cytochrome c oxidase subunit 2 (MT-CO2) of Acomys wilsoni (Wilson's spiny mouse).